The following is an 82-amino-acid chain: Antitoxin MazE2 (82 aa).

As to quaternary structure, probably forms a complex with cognate toxin MazF2.

In terms of biological role, antitoxin component of a type II toxin-antitoxin (TA) system. Labile antitoxin that binds to cognate MazF2 toxin and counteracts its endoribonuclease activity. In Mycobacterium bovis (strain ATCC BAA-935 / AF2122/97), this protein is Antitoxin MazE2 (mazE2).